Here is a 379-residue protein sequence, read N- to C-terminus: Galactose-1-phosphate uridylyltransferase (379 aa).

A compositionally biased stretch (polar residues) spans 1 to 15 (MSQSGADPEQRQQAS). The interval 1 to 20 (MSQSGADPEQRQQASEADAM) is disordered. Zn(2+) is bound at residue cysteine 75. Residues alanine 81, 97-98 (ND), and asparagine 173 each bind UDP-alpha-D-glucose. Histidine 184 lines the Zn(2+) pocket. Histidine 186 acts as the Tele-UMP-histidine intermediate in catalysis. UDP-alpha-D-glucose is bound at residue glutamine 188. Zn(2+)-binding residues include glutamate 202, histidine 301, histidine 319, and histidine 321. UDP-alpha-D-glucose is bound by residues 334–337 (KFMV) and 339–340 (YE).

The protein belongs to the galactose-1-phosphate uridylyltransferase type 1 family. In terms of assembly, homodimer. Requires Zn(2+) as cofactor.

It catalyses the reaction alpha-D-galactose 1-phosphate + UDP-alpha-D-glucose = alpha-D-glucose 1-phosphate + UDP-alpha-D-galactose. Its pathway is carbohydrate metabolism; galactose metabolism. Functionally, plays an important role in galactose metabolism. This chain is Galactose-1-phosphate uridylyltransferase (Galt), found in Rattus norvegicus (Rat).